Here is a 167-residue protein sequence, read N- to C-terminus: UPF0114 protein in repA1-repA2 intergenic region (167 aa).

The next 3 membrane-spanning stretches (helical) occupy residues 15-35 (LMFP…LKFF), 53-73 (LVLA…LVMV), and 136-156 (IMLC…MAYI).

The protein belongs to the UPF0114 family.

The protein resides in the cell membrane. The chain is UPF0114 protein in repA1-repA2 intergenic region from Buchnera aphidicola subsp. Schizaphis graminum (strain Sg).